Reading from the N-terminus, the 344-residue chain is N-acetyl-gamma-glutamyl-phosphate reductase (344 aa).

Cys149 is a catalytic residue.

The protein belongs to the NAGSA dehydrogenase family. Type 1 subfamily.

It localises to the cytoplasm. It carries out the reaction N-acetyl-L-glutamate 5-semialdehyde + phosphate + NADP(+) = N-acetyl-L-glutamyl 5-phosphate + NADPH + H(+). It functions in the pathway amino-acid biosynthesis; L-arginine biosynthesis; N(2)-acetyl-L-ornithine from L-glutamate: step 3/4. Catalyzes the NADPH-dependent reduction of N-acetyl-5-glutamyl phosphate to yield N-acetyl-L-glutamate 5-semialdehyde. The polypeptide is N-acetyl-gamma-glutamyl-phosphate reductase (Acidithiobacillus ferrooxidans (strain ATCC 23270 / DSM 14882 / CIP 104768 / NCIMB 8455) (Ferrobacillus ferrooxidans (strain ATCC 23270))).